The primary structure comprises 25 residues: VLYQAVNVFSMDVIDVNSAAPKTCD.

Homodimer. In terms of processing, N-glycosylated.

Functionally, D-galactose specific lectin. Binds in decreasing order of affinity: melibiose, N-acetyllactosamine, D-galacturonic acid, D-galactose, methyl-alpha-D-galactoside, D-galactose, methyl-alpha-D-galactopyranoside, methyl-beta-D-galactopyranoside and lactose. Binds also the glycoproteins globotriose, asialofetuin and mucin. Possesses glycan-dependent cytotoxic activity against Burkitt's lymphoma Raji cells and erythroleukemia K562 cells. Has calcium-independent hemagglutinating activity towards human erythrocytes. The protein is Galactose-binding lectin-2 of Aplysia kurodai (Kuroda's sea hare).